The sequence spans 195 residues: dITP/XTP pyrophosphatase (195 aa).

Residue serine 8–lysine 13 participates in substrate binding. 2 residues coordinate Mg(2+): glutamate 38 and aspartate 67. Aspartate 67 serves as the catalytic Proton acceptor. Substrate contacts are provided by residues serine 68, phenylalanine 146 to aspartate 149, lysine 169, and histidine 174 to arginine 175.

The protein belongs to the HAM1 NTPase family. As to quaternary structure, homodimer. Requires Mg(2+) as cofactor.

It carries out the reaction XTP + H2O = XMP + diphosphate + H(+). It catalyses the reaction dITP + H2O = dIMP + diphosphate + H(+). The enzyme catalyses ITP + H2O = IMP + diphosphate + H(+). In terms of biological role, pyrophosphatase that catalyzes the hydrolysis of nucleoside triphosphates to their monophosphate derivatives, with a high preference for the non-canonical purine nucleotides XTP (xanthosine triphosphate), dITP (deoxyinosine triphosphate) and ITP. Seems to function as a house-cleaning enzyme that removes non-canonical purine nucleotides from the nucleotide pool, thus preventing their incorporation into DNA/RNA and avoiding chromosomal lesions. In Parasynechococcus marenigrum (strain WH8102), this protein is dITP/XTP pyrophosphatase.